A 247-amino-acid polypeptide reads, in one-letter code: Agamous-like MADS-box protein AGL28 (247 aa).

The region spanning Leu6 to Asn66 is the MADS-box domain. A coiled-coil region spans residues Thr91–His168.

Expressed in roots, leaves and shoot apices.

The protein localises to the nucleus. In terms of biological role, probable transcription factor that may function as a floral promoter operating upstream of known floral activators in the autonomous pathway. This Arabidopsis thaliana (Mouse-ear cress) protein is Agamous-like MADS-box protein AGL28.